The primary structure comprises 178 residues: Putative metal-dependent hydrolase GTNG_0529 (178 aa).

Zn(2+) is bound by residues His68, His161, and His165.

Belongs to the metal hydrolase YfiT family. As to quaternary structure, homodimer. It depends on Zn(2+) as a cofactor.

It is found in the cytoplasm. Its function is as follows. Possible metal-dependent hydrolase. The protein is Putative metal-dependent hydrolase GTNG_0529 of Geobacillus thermodenitrificans (strain NG80-2).